The sequence spans 332 residues: Ornithine carbamoyltransferase 1, catabolic (332 aa).

Residues 56–59 (STRT), Q83, R107, and 134–137 (HPTQ) each bind carbamoyl phosphate. Residues N167, D231, and 235–236 (SM) each bind L-ornithine. Residues 273–274 (CL) and R318 contribute to the carbamoyl phosphate site.

The protein belongs to the aspartate/ornithine carbamoyltransferase superfamily. OTCase family.

The protein localises to the cytoplasm. It catalyses the reaction carbamoyl phosphate + L-ornithine = L-citrulline + phosphate + H(+). It participates in amino-acid degradation; L-arginine degradation via ADI pathway; carbamoyl phosphate from L-arginine: step 2/2. Its function is as follows. Reversibly catalyzes the transfer of the carbamoyl group from carbamoyl phosphate (CP) to the N(epsilon) atom of ornithine (ORN) to produce L-citrulline. This Staphylococcus epidermidis (strain ATCC 12228 / FDA PCI 1200) protein is Ornithine carbamoyltransferase 1, catabolic (arcB1).